The chain runs to 230 residues: Ribosome maturation factor RimM (230 aa).

The region spanning 149 to 230 (ADEFYWVDLI…RVVVDWEADY (82 aa)) is the PRC barrel domain.

It belongs to the RimM family. Binds ribosomal protein uS19.

The protein resides in the cytoplasm. In terms of biological role, an accessory protein needed during the final step in the assembly of 30S ribosomal subunit, possibly for assembly of the head region. Essential for efficient processing of 16S rRNA. May be needed both before and after RbfA during the maturation of 16S rRNA. It has affinity for free ribosomal 30S subunits but not for 70S ribosomes. The polypeptide is Ribosome maturation factor RimM (Burkholderia mallei (strain NCTC 10229)).